The primary structure comprises 346 residues: Phenylalanine--tRNA ligase alpha subunit (346 aa).

Mg(2+) is bound at residue Glu-261.

It belongs to the class-II aminoacyl-tRNA synthetase family. Phe-tRNA synthetase alpha subunit type 1 subfamily. Tetramer of two alpha and two beta subunits. Mg(2+) serves as cofactor.

The protein resides in the cytoplasm. It carries out the reaction tRNA(Phe) + L-phenylalanine + ATP = L-phenylalanyl-tRNA(Phe) + AMP + diphosphate + H(+). This chain is Phenylalanine--tRNA ligase alpha subunit, found in Dehalococcoides mccartyi (strain ATCC BAA-2100 / JCM 16839 / KCTC 5957 / BAV1).